The primary structure comprises 94 residues: ESAT-6-like protein EsxI (94 aa).

This sequence belongs to the WXG100 family. ESAT-6 subfamily.

It localises to the secreted. In Mycobacterium tuberculosis (strain CDC 1551 / Oshkosh), this protein is ESAT-6-like protein EsxI.